A 230-amino-acid chain; its full sequence is Probable methylthioribulose-1-phosphate dehydratase (230 aa).

Residue Cys87 participates in substrate binding. Residues His105 and His107 each coordinate Zn(2+). The active-site Proton donor/acceptor is Glu129. His185 serves as a coordination point for Zn(2+).

This sequence belongs to the aldolase class II family. MtnB subfamily. Zn(2+) serves as cofactor.

Its subcellular location is the cytoplasm. The catalysed reaction is 5-(methylsulfanyl)-D-ribulose 1-phosphate = 5-methylsulfanyl-2,3-dioxopentyl phosphate + H2O. It participates in amino-acid biosynthesis; L-methionine biosynthesis via salvage pathway; L-methionine from S-methyl-5-thio-alpha-D-ribose 1-phosphate: step 2/6. Its function is as follows. Catalyzes the dehydration of methylthioribulose-1-phosphate (MTRu-1-P) into 2,3-diketo-5-methylthiopentyl-1-phosphate (DK-MTP-1-P). This is Probable methylthioribulose-1-phosphate dehydratase from Drosophila grimshawi (Hawaiian fruit fly).